Consider the following 343-residue polypeptide: Twinfilin (343 aa).

ADF-H domains follow at residues Gln4–Val139 and Gly177–His312. The segment at Arg314–Glu343 is disordered.

Belongs to the actin-binding proteins ADF family. Twinfilin subfamily. In terms of assembly, interacts with G-actin; ADP-actin form.

It is found in the cytoplasm. The protein localises to the cytoskeleton. It localises to the cell cortex. Its function is as follows. Actin-binding protein involved in motile and morphological processes. Inhibits actin polymerization, likely by sequestering G-actin. The chain is Twinfilin (twf) from Anopheles gambiae (African malaria mosquito).